The following is a 946-amino-acid chain: MRFAFDSNHSQSGAPFKGSRCFFNCQCICCRQGCCVVVVKCCCCFNLNCCNSLGSRKSFPQPAAMRKKVADLEVLRVSRFVAVILVLARWVTAVATLLTSCILLDIFSVPGQSGVADRSQASSRTVHVSVPTTPNETPSSTSETKLKLLYGYTSYDINNDQQVKSNNLCRVLCKSRNRKRQRRRRRRRNHRRRRHRYTKRLHHLMQDNMSGFEQRLNFSDAKCQSLETNYGTNYDLVQGGKLFSQSERSLLVSPLREIEAPWPAIHGSMRNCSKIKRNRANLIWLLIGLVWFEVKLINCNGISSSNYYASNLESHKGCTLCHESGKPNIYTDKDNPHTDYNIYNKYHSNNNFNKKTNQPHNNIAPSDEVRLESIKRQILTKLGLSHKPNVSHPLPKQFIWETIYRVDGGRMIPNNAFGSSGKNLDQKTIKLRAFASPGSHLFNGRGGRTDQRSERDPSHHKYRSPFDFTFNISKNNVYGKVLRNRSLERIDKKNSFLNGWTENRQLKINSQIASMPIELKSHHNSSPKELKSGAVRKVNGINGTQMNENALKKSTYPIDINHSIDNKTHTGKNGEMSHNDYEYFNDYSVQTHDKNRYHEGRSSIGYQPAIHNIEYENQKGHHESFADDHENIDHEDFFGNTQEIITFAEEGTQYRQYRILEFSAQNRRVPSQKLSIRSAQIHIRIDKPHSLWIEKAKSLPEKHLLNTKRKWGANKPHHRIKIWVFQLSTSINITEKGIDKAIIFRASFQVDPKNLGWQKFDLTDTIREWYGHTSHEKLRLLIDCTGCGGRYSLHLFQTSKLRGNSSDYLSTNPNRPFLVLHTESSRTRRVRRRAVDCGGALNGQCCKESFYVSFKALGWDDWIIAPRGYFANYCRGDCTGSFRTPDTFQTFHAHFIEEYRKMGLMNGMRPCCAPIKFSSMSLIYYGDDGIIKRDLPKMVVDECGCP.

2 disordered regions span residues 115 to 142 and 174 to 194; these read VADR…SSTS and KSRN…RRRR. The span at 128–142 shows a compositional bias: low complexity; it reads VSVPTTPNETPSSTS. Residues Asn208, Asn217, Asn271, and Asn389 are each glycosylated (N-linked (GlcNAc...) asparagine). Residues 436-462 are disordered; it reads SPGSHLFNGRGGRTDQRSERDPSHHKY. A compositionally biased stretch (basic and acidic residues) spans 447–459; it reads GRTDQRSERDPSH. N-linked (GlcNAc...) asparagine glycosylation is found at Asn471, Asn484, Asn542, Asn561, Asn566, Asn732, and Asn804. Cystine bridges form between Cys837/Cys846, Cys845/Cys912, Cys874/Cys943, and Cys878/Cys945.

The protein belongs to the TGF-beta family. Homodimer or heterodimer; disulfide-linked. Post-translationally, cleaved in vitro by metalloproteases tok and tld to produce a 30 kDa product. As to expression, widely expressed in larval brains.

It is found in the secreted. In terms of biological role, controls several aspects of neuronal morphogenesis; essential for optic lobe development, EcR-B1 expression in larval brains, mushroom body remodeling, dorsal neuron morphogenesis and motoneuron axon guidance. Ligands Actbeta and daw act redundantly through the Activin receptor Babo and its transcriptional mediator Smad2 (Smox), to regulate neuroblast numbers and proliferation rates in the developing larval brain. The polypeptide is Inhibin beta chain (Actbeta) (Drosophila melanogaster (Fruit fly)).